A 382-amino-acid polypeptide reads, in one-letter code: UDP-4-amino-4-deoxy-L-arabinose--oxoglutarate aminotransferase (382 aa).

Position 183 is an N6-(pyridoxal phosphate)lysine (Lys-183).

The protein belongs to the DegT/DnrJ/EryC1 family. ArnB subfamily. In terms of assembly, homodimer. The cofactor is pyridoxal 5'-phosphate.

It carries out the reaction UDP-4-amino-4-deoxy-beta-L-arabinose + 2-oxoglutarate = UDP-beta-L-threo-pentopyranos-4-ulose + L-glutamate. The protein operates within nucleotide-sugar biosynthesis; UDP-4-deoxy-4-formamido-beta-L-arabinose biosynthesis; UDP-4-deoxy-4-formamido-beta-L-arabinose from UDP-alpha-D-glucuronate: step 2/3. Its pathway is bacterial outer membrane biogenesis; lipopolysaccharide biosynthesis. In terms of biological role, catalyzes the conversion of UDP-4-keto-arabinose (UDP-Ara4O) to UDP-4-amino-4-deoxy-L-arabinose (UDP-L-Ara4N). The modified arabinose is attached to lipid A and is required for resistance to polymyxin and cationic antimicrobial peptides. This Pseudomonas syringae pv. syringae (strain B728a) protein is UDP-4-amino-4-deoxy-L-arabinose--oxoglutarate aminotransferase.